The chain runs to 552 residues: Gamma-aminobutyric acid receptor subunit alpha-4 (552 aa).

Positions Met1 to Gly35 are cleaved as a signal peptide. Topologically, residues Gln36–Phe259 are extracellular. Residue Asn47 is glycosylated (N-linked (GlcNAc...) asparagine). Arg100 contributes to the 4-aminobutanoate binding site. 2 N-linked (GlcNAc...) asparagine glycosylation sites follow: Asn144 and Asn157. 4-aminobutanoate is bound at residue Thr163. A disulfide bridge connects residues Cys172 and Cys186. A helical membrane pass occupies residues Met260–Ile280. At Asn281–Ser284 the chain is on the cytoplasmic side. A helical transmembrane segment spans residues Val285–Ser305. The Extracellular portion of the chain corresponds to Ala306 to Ala318. The helical transmembrane segment at Met319–Asn341 threads the bilayer. The Cytoplasmic portion of the chain corresponds to Tyr342–Lys515. Disordered regions lie at residues Lys353–Ser436, Ala448–Ser470, and Thr486–Thr513. Residues Arg403–Thr423 are compositionally biased toward polar residues. Composition is skewed to low complexity over residues Ala448 to Ser458 and Thr486 to Ala499. Positions Thr500–Ser509 are enriched in pro residues. Residues Ile516–Val538 traverse the membrane as a helical segment. Residues Tyr539 to Met552 lie on the Extracellular side of the membrane.

This sequence belongs to the ligand-gated ion channel (TC 1.A.9) family. Gamma-aminobutyric acid receptor (TC 1.A.9.5) subfamily. GABRA4 sub-subfamily. In terms of assembly, heteropentamer, formed by a combination of alpha (GABRA1-6), beta (GABRB1-3), gamma (GABRG1-3), delta (GABRD), epsilon (GABRE), rho (GABRR1-3), pi (GABRP) and theta (GABRQ) chains, each subunit exhibiting distinct physiological and pharmacological properties. Expressed in the brain.

The protein resides in the cell membrane. It is found in the postsynaptic cell membrane. Potentiated by histamine. Alpha subunit of the heteropentameric ligand-gated chloride channel gated by gamma-aminobutyric acid (GABA), a major inhibitory neurotransmitter in the brain. GABA-gated chloride channels, also named GABA(A) receptors (GABAAR), consist of five subunits arranged around a central pore and contain GABA active binding site(s) located at the alpha and beta subunit interface(s). Alpha-4/GABRA4 subunit often assembles with delta or gamma-2 subunits, in combination with beta subunits. When activated by GABA, GABAARs selectively allow the flow of chloride anions across the cell membrane down their electrochemical gradient. GABAARs containing alpha-4 are predominantly extrasynaptic, contributing to tonic inhibition in dentate granule cells and thalamic relay neurons. Extrasynaptic alpha-4-containing GABAARs control levels of excitability and network activity. GABAAR containing alpha-4-beta-3-delta subunits can simultaneously bind GABA and histamine where histamine binds at the interface of two neighboring beta subunits, which may be involved in the regulation of sleep and wakefulness. The polypeptide is Gamma-aminobutyric acid receptor subunit alpha-4 (Rattus norvegicus (Rat)).